The sequence spans 126 residues: Aspartate 1-decarboxylase (126 aa).

Ser25 serves as the catalytic Schiff-base intermediate with substrate; via pyruvic acid. A Pyruvic acid (Ser) modification is found at Ser25. Residue Thr57 coordinates substrate. Catalysis depends on Tyr58, which acts as the Proton donor. 73 to 75 provides a ligand contact to substrate; sequence GAA.

Belongs to the PanD family. As to quaternary structure, heterooctamer of four alpha and four beta subunits. Pyruvate is required as a cofactor. Is synthesized initially as an inactive proenzyme, which is activated by self-cleavage at a specific serine bond to produce a beta-subunit with a hydroxyl group at its C-terminus and an alpha-subunit with a pyruvoyl group at its N-terminus.

Its subcellular location is the cytoplasm. The enzyme catalyses L-aspartate + H(+) = beta-alanine + CO2. Its pathway is cofactor biosynthesis; (R)-pantothenate biosynthesis; beta-alanine from L-aspartate: step 1/1. In terms of biological role, catalyzes the pyruvoyl-dependent decarboxylation of aspartate to produce beta-alanine. This Thioalkalivibrio sulfidiphilus (strain HL-EbGR7) protein is Aspartate 1-decarboxylase.